The primary structure comprises 1889 residues: MACCHKVMLLVDTAGVSAPHSPARRAALRLLTYLSCRFGLARVHWTFKFFDSQGARSRPSRVSDFRELGSRSWEDFEEELEARLGDRPPGAHLPGPTPRATHTHGALMETLLDYQWDRPEITSPTKPILRSSGRRLLDADGEAREAQAALGGFGNAVFLLAPCPHSQRELLQFVSGCEAQAQRVPLTPKQVMEKVLPKRVQEVMIARNITLYWVDTTERSKLWASPDHVGYWTVCELLHHGGGTILPAETWSLGFTKARETVLPCGGELSHKPHPSPWISALPIDATVNCLLYNSEYEASFPRIEGTLFLPVQGKEIEETWAISLEPLAMHQRHFQKPVRIVLRGSVAQWSLPVSSALGTDSWMLQSPEEHRSTQRLLFQELVSRLTAEEFHLVASVDPGEGWPPITGIISPFSANAMILTVFRAKEAEFQSHFLQTAATEGSQDTASLFSDVVDSVLNQSHNLFEDPASSAPCVPEWVQQELSHTSSWSPALVEKWFPFSNASGATSDLMESFWLLHAASPDNDESSKTESELTRCLSELYQRSHEESTVVNQERSRKKRGIPRTPVRQKMNTMSRSLKMLNVARLNVKAQKLHPDGSPDTAVEKGLQKAVIGRTADKLEDRGRILRSSKLKEFKTEEELLAYIHDNYQKAVATEEITLYSCAQNMVSTIKMFLKSKDIKELEVACLSHVNSNLLKTSKTLRQNLAGKMDTEDKVGECQLQVFLRLEMCEQCPSVLDRPDEVERIVEEVTDLLRLVCLTKDSAYLSEFLEEILRLYIGSIPGTIGQLYHSLGLKIPQKLAGVLPTGFFSDDSMSQESMSPPPSSSTHRSVSAITESEQLEELRTRSAKKRRKNALIRHKSIAEISQTLRQIEVPKVSKRATRNENSHSASIQLPVPRKDTIQEVTKVRRNLFNQEMLSPSKRGLKKGLPRSHSVSALECLHHKQDKFKKTKSSTFQGYCKLLTKSVAETPVHKQISRRLLHRQIKGRSSDPGPDIHVVEESPEKEDEMTLRRSPRIKQLSFSRTNSGSFYSVSQPKSRSVQRIHSSQQESEQRENFPVQSIQSPKTLLFGALSEIPSSSKKGSAQIKRSLRSMLDSEISTSYETPKKSNQKSPSFSKTTPRRFPRTAQTLLYTPERLQNSPTEMTSAEGTISEATIKTPSSHGYNSPFASKVTSQKTVSPAKEETSPPLTKLPSTPRESDVQPPQCSSDCTWPHSVNSSPEGPYYPASPPPMAGQARSQCLTPIRYSFRTPPRTALAGTSKQQEHQELPLPRASQTQEPPQGLEKKALKIPKKPAHTSTSPLSPEEHYSGCDVSPHQPRNSLSASPPPGELNWKEHQTSPSVTSSVSCPVPSTPPRTPQRMTCPIPPSPPSKLRRSCRKKSCPPQDFPECHPGPSAAPVLSSATSPGAVTGSREEQSQFSEGQSYLGTGFRSDCHVSSPVLTASDTKCLPLIDEAQLHGLKNQEVKSGILPGEEGEEPESTIADELPSVSDPGILVPAPSSVSSSSELLPYPLCCTADGKQRQDAAQQGSPRASEATSSPQTYEVELEMQASGLPKLRIKKIDPGVLLEAEALGKEAPLGEEGALPALCMPKASKSSGRTEHPYLSPPCLRPSHSTPGKNGGQTFICQSCTPSRCPPSTPSPFQADAGVSWTPSPKQSGKTTPEIIKDWPRRKRAVDCSAGPSAGRGEASMDLPGSLSLLEPEPEGKERSLEQDLSKVLISEEFELEGVCQLPDQSPPKDSASVTEETSWGQFGLGRKRFLSAKEESEYKVKRVCDSLSEDPQASKQKECSPRWSALPLHSVGDDEVFVSGSTPPSGCMVRSCLSASGLQALTQSPLLFQGRTPSSHSTDTRDEEVDVFPSTAEESPFSHTLSRKRPFRTYTRKKLIS.

9 positions are modified to phosphoserine: S295, S599, S820, S861, S919, S934, S1002, S1027, and S1078. Residues 812-832 are compositionally biased toward low complexity; that stretch reads DSMSQESMSPPPSSSTHRSVS. A disordered region spans residues 812–836; the sequence is DSMSQESMSPPPSSSTHRSVSAITE. The segment at 979 to 1063 is disordered; it reads RLLHRQIKGR…RENFPVQSIQ (85 aa). The segment covering 1020 to 1050 has biased composition (polar residues); the sequence is LSFSRTNSGSFYSVSQPKSRSVQRIHSSQQE. Disordered regions lie at residues 1098–1421, 1471–1508, 1520–1543, 1630–1714, 1730–1751, and 1841–1875; these read EIST…SQFS, LPGE…SSSE, GKQR…SPQT, SCTP…SLEQ, VCQL…ETSW, and QGRT…TLSR. Positions 1127–1179 are enriched in polar residues; the sequence is TAQTLLYTPERLQNSPTEMTSAEGTISEATIKTPSSHGYNSPFASKVTSQKTV. The residue at position 1134 (T1134) is a Phosphothreonine. The residue at position 1141 (S1141) is a Phosphoserine. Low complexity predominate over residues 1187 to 1197; that stretch reads SPPLTKLPSTP. Residues 1203 to 1219 show a composition bias toward polar residues; the sequence is QPPQCSSDCTWPHSVNS. Residues 1339 to 1351 show a composition bias toward low complexity; sequence TSPSVTSSVSCPV. The segment covering 1373–1382 has biased composition (basic residues); that stretch reads KLRRSCRKKS. S1406 carries the phosphoserine modification. The span at 1496–1508 shows a compositional bias: low complexity; that stretch reads LVPAPSSVSSSSE. Composition is skewed to polar residues over residues 1525-1543 and 1652-1662; these read DAAQ…SPQT and WTPSPKQSGKT. Residues 1705–1714 are compositionally biased toward basic and acidic residues; the sequence is PEGKERSLEQ.

The protein belongs to the treslin family. Interacts with TOPBP1 (via BRCT domains); interaction takes place in a CDK2-dependent manner. Component of the replisome complex composed of at least DONSON, MCM2, MCM7, PCNA and TICRR.

Its subcellular location is the nucleus. In terms of biological role, regulator of DNA replication and S/M and G2/M checkpoints. Regulates the triggering of DNA replication initiation via its interaction with TOPBP1 by participating in CDK2-mediated loading of CDC45L onto replication origins. Required for the transition from pre-replication complex (pre-RC) to pre-initiation complex (pre-IC). Required to prevent mitotic entry after treatment with ionizing radiation. This chain is Treslin (Ticrr), found in Mus musculus (Mouse).